The following is a 142-amino-acid chain: Large ribosomal subunit protein uL13 (142 aa).

Belongs to the universal ribosomal protein uL13 family. In terms of assembly, part of the 50S ribosomal subunit.

This protein is one of the early assembly proteins of the 50S ribosomal subunit, although it is not seen to bind rRNA by itself. It is important during the early stages of 50S assembly. The chain is Large ribosomal subunit protein uL13 from Tolumonas auensis (strain DSM 9187 / NBRC 110442 / TA 4).